A 315-amino-acid polypeptide reads, in one-letter code: MVLASGNSSSHPVSFILLGIPGLESFQLWIAFPFCATYAVAVVGNITLLHVIRIDHTLHEPMYLFLAMLAITDLVLSSSTQPKMLAIFWFHAHEIQYHACLIQVFFIHAFSSVESGVLMAMALDCYVAICFPLRHSSILTPSVVIKLGTIVMLRGLLWVSPFCFMVSRMPFCQHQAIPQSYCEHMAVLKLVCADTSISRGNGLFVAFSVAGFDMIVIGMSYVMILRAVLQLPSGEARLKAFSTRSSHICVILALYIPALFSFLTYRFGHDVPRVVHILFANLYLLIPPMLNPIIYGVRTKQIGDRVIQGCCGNIP.

Topologically, residues 1-28 (MVLASGNSSSHPVSFILLGIPGLESFQL) are extracellular. Residue Asn7 is glycosylated (N-linked (GlcNAc...) asparagine). The helical transmembrane segment at 29–49 (WIAFPFCATYAVAVVGNITLL) threads the bilayer. Residues 50–57 (HVIRIDHT) lie on the Cytoplasmic side of the membrane. The chain crosses the membrane as a helical span at residues 58-78 (LHEPMYLFLAMLAITDLVLSS). Residues 79–102 (STQPKMLAIFWFHAHEIQYHACLI) are Extracellular-facing. Cys100 and Cys192 form a disulfide bridge. The chain crosses the membrane as a helical span at residues 103-123 (QVFFIHAFSSVESGVLMAMAL). The Cytoplasmic segment spans residues 124–142 (DCYVAICFPLRHSSILTPS). Residues 143-163 (VVIKLGTIVMLRGLLWVSPFC) traverse the membrane as a helical segment. The Extracellular portion of the chain corresponds to 164 to 199 (FMVSRMPFCQHQAIPQSYCEHMAVLKLVCADTSISR). Residues 200–220 (GNGLFVAFSVAGFDMIVIGMS) traverse the membrane as a helical segment. Residues 221 to 240 (YVMILRAVLQLPSGEARLKA) lie on the Cytoplasmic side of the membrane. The chain crosses the membrane as a helical span at residues 241–261 (FSTRSSHICVILALYIPALFS). Residues 262–276 (FLTYRFGHDVPRVVH) lie on the Extracellular side of the membrane. A helical transmembrane segment spans residues 277–297 (ILFANLYLLIPPMLNPIIYGV). At 298 to 315 (RTKQIGDRVIQGCCGNIP) the chain is on the cytoplasmic side.

It belongs to the G-protein coupled receptor 1 family.

The protein resides in the cell membrane. In terms of biological role, odorant receptor. This chain is Olfactory receptor 52R1 (OR52R1), found in Homo sapiens (Human).